Here is a 72-residue protein sequence, read N- to C-terminus: MSARFEGSYLGDATRLADDAVLECKICWQRYDPAEGDPVWQIPPGTPFAALPAHWRCPRCDGDREQFMVVDG.

Residues 19-72 (DAVLECKICWQRYDPAEGDPVWQIPPGTPFAALPAHWRCPRCDGDREQFMVVDG) enclose the Rubredoxin-like domain. 4 residues coordinate Fe cation: C24, C27, C57, and C60.

It belongs to the rubredoxin family. It depends on Fe(3+) as a cofactor.

In terms of biological role, rubredoxin is a small nonheme, iron protein lacking acid-labile sulfide. Its single Fe, chelated to 4 Cys, functions as an electron acceptor and may also stabilize the conformation of the molecule. Could be involved in hydrogenase-linked redox processes. The protein is Rubredoxin (hoxR) of Azotobacter vinelandii.